The primary structure comprises 437 residues: MRNTELVQWFRQSTPYVNMHREKTFVIMLDGNAIAHPNFINITNDIGLLHSLGIKLVIVFGARCQIDELLAKNQMSSTYHKHIRITDSKTLEVVKQAVGGLHYDIFSRLSLRLPNSPVLNVVSSNAVLAQPLGVIDGVDYGLSGKIRRINIEGIQQQLAQDAIVVIGPIAPSVTGEMFNLPFEEIATQIAIKLKADKLIGFCDQQGILDSEGNVLSDLHPREAKRYLTQFIESGQYHHSAARFLQAAIEACHAGIKRSHLLSYKEDGSLLQELFSRDGIGTQLSEESSENIRLATSFDIPGLLNLIRPLEEQGILVKRSREQLEMEISNYTIIERDGIVIACAALNHYPQEKMAEMACVAVHPDYRDSSRGDVLLEAIKRRAYKLQVEKLFVLTTRTTQWFQERGFVLSTTDDLPKEKREHYNYQRMSKILILDLGQ.

Residues 289–429 form the N-acetyltransferase domain; that stretch reads ENIRLATSFD…EHYNYQRMSK (141 aa).

Belongs to the acetyltransferase family. ArgA subfamily.

Its subcellular location is the cytoplasm. The catalysed reaction is L-glutamate + acetyl-CoA = N-acetyl-L-glutamate + CoA + H(+). The protein operates within amino-acid biosynthesis; L-arginine biosynthesis; N(2)-acetyl-L-ornithine from L-glutamate: step 1/4. The protein is Amino-acid acetyltransferase of Actinobacillus pleuropneumoniae serotype 5b (strain L20).